A 312-amino-acid polypeptide reads, in one-letter code: Methionyl-tRNA formyltransferase (312 aa).

109 to 112 serves as a coordination point for (6S)-5,6,7,8-tetrahydrofolate; it reads SLLP.

This sequence belongs to the Fmt family.

It catalyses the reaction L-methionyl-tRNA(fMet) + (6R)-10-formyltetrahydrofolate = N-formyl-L-methionyl-tRNA(fMet) + (6S)-5,6,7,8-tetrahydrofolate + H(+). Its function is as follows. Attaches a formyl group to the free amino group of methionyl-tRNA(fMet). The formyl group appears to play a dual role in the initiator identity of N-formylmethionyl-tRNA by promoting its recognition by IF2 and preventing the misappropriation of this tRNA by the elongation apparatus. The chain is Methionyl-tRNA formyltransferase from Listeria monocytogenes serotype 4b (strain CLIP80459).